A 41-amino-acid polypeptide reads, in one-letter code: Iota-conotoxin-like r11d (41 aa).

4 cysteine pairs are disulfide-bonded: Cys2/Cys16, Cys9/Cys19, Cys15/Cys24, and Cys18/Cys35. Residue Pro8 is modified to 4-hydroxyproline. At Pro26 the chain carries 4-hydroxyproline.

In terms of processing, position 41 corresponds to a L-threonine, and not a D-threonine as firstly supposed. Expressed by the venom duct.

Its subcellular location is the secreted. Functionally, iota-conotoxins bind to voltage-gated sodium channels (Nav) and act as agonists by shifting the voltage-dependence of activation to more hyperpolarized levels. Both natural (L-Thr form) and synthetic (D-Thr form) peptides cause paralysis and death following intracranial injection and grooming and hypersensitivity upon intraperitoneal injection into mice. The L-Thr form of the peptide is 7-fold more potent than the D-Thr form. Both natural peptide (L-Thr form) and synthetic peptide (D-Thr form) are active on nerve, and on muscle. In Conus radiatus (Rayed cone), this protein is Iota-conotoxin-like r11d.